The primary structure comprises 345 residues: NADH-quinone oxidoreductase subunit H (345 aa).

Helical transmembrane passes span 13 to 33 (VIIL…LLFL), 84 to 104 (FILA…VIPF), 115 to 135 (VAIL…IMGG), 161 to 181 (IGLI…GDIV), 190 to 210 (LFNW…ISCL), 248 to 268 (YIAI…GWLS), 277 to 297 (PLWM…VKAI), and 309 to 329 (LGWK…AFAA).

This sequence belongs to the complex I subunit 1 family. As to quaternary structure, NDH-1 is composed of 14 different subunits. Subunits NuoA, H, J, K, L, M, N constitute the membrane sector of the complex.

It is found in the cell inner membrane. It catalyses the reaction a quinone + NADH + 5 H(+)(in) = a quinol + NAD(+) + 4 H(+)(out). NDH-1 shuttles electrons from NADH, via FMN and iron-sulfur (Fe-S) centers, to quinones in the respiratory chain. The immediate electron acceptor for the enzyme in this species is believed to be ubiquinone. Couples the redox reaction to proton translocation (for every two electrons transferred, four hydrogen ions are translocated across the cytoplasmic membrane), and thus conserves the redox energy in a proton gradient. This subunit may bind ubiquinone. The polypeptide is NADH-quinone oxidoreductase subunit H (Ruegeria sp. (strain TM1040) (Silicibacter sp.)).